The primary structure comprises 263 residues: 5'-nucleotidase SurE (263 aa).

Positions 8, 9, 40, and 93 each coordinate a divalent metal cation.

The protein belongs to the SurE nucleotidase family. Requires a divalent metal cation as cofactor.

Its subcellular location is the cytoplasm. The catalysed reaction is a ribonucleoside 5'-phosphate + H2O = a ribonucleoside + phosphate. Nucleotidase that shows phosphatase activity on nucleoside 5'-monophosphates. The chain is 5'-nucleotidase SurE from Caulobacter vibrioides (strain ATCC 19089 / CIP 103742 / CB 15) (Caulobacter crescentus).